A 143-amino-acid chain; its full sequence is Endoribonuclease YbeY (143 aa).

Residues His-113, His-117, and Asp-123 each contribute to the Zn(2+) site.

Belongs to the endoribonuclease YbeY family. The cofactor is Zn(2+).

It is found in the cytoplasm. Functionally, single strand-specific metallo-endoribonuclease involved in late-stage 70S ribosome quality control and in maturation of the 3' terminus of the 16S rRNA. This is Endoribonuclease YbeY from Elusimicrobium minutum (strain Pei191).